The primary structure comprises 390 residues: Chaperone protein DnaJ (390 aa).

The 65-residue stretch at D6–G70 folds into the J domain. A CR-type zinc finger spans residues G146–K228. 8 residues coordinate Zn(2+): C159, C162, C176, C179, C202, C205, C216, and C219. CXXCXGXG motif repeat units lie at residues C159–G166, C176–G183, C202–G209, and C216–G223.

This sequence belongs to the DnaJ family. Homodimer. Zn(2+) serves as cofactor.

The protein localises to the cytoplasm. Functionally, participates actively in the response to hyperosmotic and heat shock by preventing the aggregation of stress-denatured proteins and by disaggregating proteins, also in an autonomous, DnaK-independent fashion. Unfolded proteins bind initially to DnaJ; upon interaction with the DnaJ-bound protein, DnaK hydrolyzes its bound ATP, resulting in the formation of a stable complex. GrpE releases ADP from DnaK; ATP binding to DnaK triggers the release of the substrate protein, thus completing the reaction cycle. Several rounds of ATP-dependent interactions between DnaJ, DnaK and GrpE are required for fully efficient folding. Also involved, together with DnaK and GrpE, in the DNA replication of plasmids through activation of initiation proteins. This is Chaperone protein DnaJ from Dictyoglomus thermophilum (strain ATCC 35947 / DSM 3960 / H-6-12).